The primary structure comprises 476 residues: Hydrogenase-4 component F homolog (476 aa).

12 consecutive transmembrane segments (helical) span residues 1–21, 25–45, 54–74, 120–140, 153–173, 202–222, 235–255, 270–290, 307–327, 368–388, 402–422, and 442–462; these read MSAA…SQIS, ISSW…LFLL, FFLV…IGFT, IGLM…MVGI, YFIL…LFYI, LVNI…GLFP, PTPI…YAIL, AGPL…LMFY, MGII…AGLL, LGWG…MGVF, SPLL…ALIL, and LYLP…YIPP.

This sequence belongs to the complex I subunit 5 family.

It is found in the cell inner membrane. The polypeptide is Hydrogenase-4 component F homolog (hyfF) (Methylacidiphilum infernorum (isolate V4) (Methylokorus infernorum (strain V4))).